The chain runs to 590 residues: G protein-coupled receptor kinase 5 (590 aa).

The segment at 1–185 (MELENIVANT…LERQPVTKNT (185 aa)) is N-terminal. The interval 20–39 (GGKRKGKSKKWKEILKFPHI) is interaction with calmodulin. An RGS domain is found at 53 to 171 (YCSLCDKQPI…LDSMFFDRFL (119 aa)). Residues 186–448 (FRQYRVLGKG…AAEVKRHPFF (263 aa)) form the Protein kinase domain. Residues 192–200 (LGKGGFGEV) and K215 contribute to the ATP site. D311 functions as the Proton acceptor in the catalytic mechanism. Positions 388-395 (RKEKVKRE) match the Nuclear localization signal motif. Positions 449 to 514 (RNMNFKRLEA…GSVSIPWQNE (66 aa)) constitute an AGC-kinase C-terminal domain. Phosphoserine; by autocatalysis is present on S484. T485 bears the Phosphothreonine; by autocatalysis mark. The segment at 531-590 (GTLPPDLNRNHPPEPPKKGLLQRLFKRQHQNNSKSSPSSKTSFNHHINSNHVSSNSTGSS) is disordered. Residues 538 to 547 (NRNHPPEPPK) show a composition bias toward basic and acidic residues. The interval 546–565 (PKKGLLQRLFKRQHQNNSKS) is sufficient for membrane localization. A compositionally biased stretch (low complexity) spans 563–590 (SKSSPSSKTSFNHHINSNHVSSNSTGSS). Position 579 is a phosphoserine (S579).

The protein belongs to the protein kinase superfamily. AGC Ser/Thr protein kinase family. GPRK subfamily. In terms of assembly, interacts with ST13 (via the C-terminus 303-319 AA). Interacts with TP53/p53. Interacts with HTR4 (via C-terminus 330-346 AA); this interaction is promoted by 5-HT (serotonin). Interacts with HDAC5. Interacts with GIT1. Post-translationally, autophosphorylated. Autophosphorylation may play a critical role in the regulation of GRK5 kinase activity. In terms of tissue distribution, highest levels in heart, placenta, lung &gt; skeletal muscle &gt; brain, liver, pancreas &gt; kidney.

The protein localises to the cytoplasm. It is found in the nucleus. It localises to the cell membrane. The enzyme catalyses [G-protein-coupled receptor] + ATP = [G-protein-coupled receptor]-phosphate + ADP + H(+). With respect to regulation, inhibited by calmodulin with an IC(50) of 50 nM. Calmodulin inhibits GRK5 association with receptor and phospholipid. Serine/threonine kinase that phosphorylates preferentially the activated forms of a variety of G-protein-coupled receptors (GPCRs). Such receptor phosphorylation initiates beta-arrestin-mediated receptor desensitization, internalization, and signaling events leading to their down-regulation. Phosphorylates a variety of GPCRs, including adrenergic receptors, muscarinic acetylcholine receptors (more specifically Gi-coupled M2/M4 subtypes), dopamine receptors and opioid receptors. In addition to GPCRs, also phosphorylates various substrates: Hsc70-interacting protein/ST13, TP53/p53, HDAC5, and arrestin-1/ARRB1. Phosphorylation of ARRB1 by GRK5 inhibits G-protein independent MAPK1/MAPK3 signaling downstream of 5HT4-receptors. Phosphorylation of HDAC5, a repressor of myocyte enhancer factor 2 (MEF2) leading to nuclear export of HDAC5 and allowing MEF2-mediated transcription. Phosphorylation of TP53/p53, a crucial tumor suppressor, inhibits TP53/p53-mediated apoptosis. Phosphorylation of ST13 regulates internalization of the chemokine receptor. Phosphorylates rhodopsin (RHO) (in vitro) and a non G-protein-coupled receptor, LRP6 during Wnt signaling (in vitro). The sequence is that of G protein-coupled receptor kinase 5 (GRK5) from Homo sapiens (Human).